A 538-amino-acid chain; its full sequence is Phosphoenolpyruvate carboxykinase (ATP) (538 aa).

The substrate site is built by R62, Y203, and K209. ATP is bound by residues K209, H228, and 244–252 (GLSGTGKTT). Residues K209 and H228 each contribute to the Mn(2+) site. D265 lines the Mn(2+) pocket. Residues E293, R329, 445–446 (RI), and T451 contribute to the ATP site. R329 is a binding site for substrate.

The protein belongs to the phosphoenolpyruvate carboxykinase (ATP) family. Monomer. Requires Mn(2+) as cofactor.

It localises to the cytoplasm. The enzyme catalyses oxaloacetate + ATP = phosphoenolpyruvate + ADP + CO2. Its pathway is carbohydrate biosynthesis; gluconeogenesis. Its function is as follows. Involved in the gluconeogenesis. Catalyzes the conversion of oxaloacetate (OAA) to phosphoenolpyruvate (PEP) through direct phosphoryl transfer between the nucleoside triphosphate and OAA. In Haemophilus ducreyi (strain 35000HP / ATCC 700724), this protein is Phosphoenolpyruvate carboxykinase (ATP).